An 843-amino-acid polypeptide reads, in one-letter code: MPLSYQHFRKLLLLDDEAGPLEEELPRLADEGLNRRVAEDLNLGNLNVSIPWTHKVGNFTGLYSSTVPVFNSEWQTPSFPDIHLQEDIINRCQQFVGPLNVNEKRRLKLVMPARFFPNLTKYLPLDKGIKPYYPEHIVNHYFKTRHYLHTLWKAGILYKRETTRSASFCGSPYSWEQELQHGRLFFKTSKRHGDESFCSQSSGILARPSVGPCFRSQFKQSRLGLQPQQGPLARGLAGRSGSIRARVHPTTRQSFGVEPSGSGHIDNSASNSSSCLHQSAVRKAAYSHLSTSKRQSSSGHAVEFHNISSSSARSQSKGPILSCWWLQFRNSKPCSDYCLSHIVNLLEDWGPCTENGEHNIRIPRTPARVTGGVFLVDKNPHNTAESRLVVDFSQFSRGSTRVSWPKFAVPNLQSLTNLLSSNLSWLSLDVSAAFYHIPLHPAAMPHLLVGSSGLPRYVARLSSNSRNINNKHGTMQDLHDSCSRHLYVSLLLLYKTFGRKLHLYSHPIILGFRKIPMGVGLSPFLLAQFTSAICSVVRRAFPHCLAFSYMDDVVLGAKSVQHLESFFTSVTNFLLSLGIHLNPHKTKRWGYSLNFMGYVIGSWGTLPQEHIVLKIKKCFRKLPVNRPIDWKVCQRIVGLLGFAAPFTQCGYPALLPLYACIQAKQAFTFSPTYKAFLCKQYLNLYPVARQRSGLCQVFADATPTGWGLAMGHQRMRGTFVAPLPIHTAELLAACFARSRSGAKLIGTDNSVVLSRKYTSFPWLLGCAANWILRGTSFVYVPSALNPADDPSRGRLGLYRPLLRLPFRPTTGRTSLYAVSPSVPSHLPVRVHFASPLHVAWRPP.

The terminal protein domain (TP) stretch occupies residues 1–177 (MPLSYQHFRK…FCGSPYSWEQ (177 aa)). A spacer region spans residues 178–346 (ELQHGRLFFK…YCLSHIVNLL (169 aa)). The interval 248-272 (HPTTRQSFGVEPSGSGHIDNSASNS) is disordered. Residues 347–690 (EDWGPCTENG…YLNLYPVARQ (344 aa)) are polymerase/reverse transcriptase domain (RT). In terms of domain architecture, Reverse transcriptase spans 357 to 600 (EHNIRIPRTP…YSLNFMGYVI (244 aa)). Residues Asp429, Asp551, and Asp552 each coordinate Mg(2+).

This sequence belongs to the hepadnaviridae P protein family.

The catalysed reaction is DNA(n) + a 2'-deoxyribonucleoside 5'-triphosphate = DNA(n+1) + diphosphate. It carries out the reaction Endonucleolytic cleavage to 5'-phosphomonoester.. With respect to regulation, activated by host HSP70 and HSP40 in vitro to be able to bind the epsilon loop of the pgRNA. Because deletion of the RNase H region renders the protein partly chaperone-independent, the chaperones may be needed indirectly to relieve occlusion of the RNA-binding site by this domain. Inhibited by several reverse-transcriptase inhibitors: Lamivudine, Adefovir and Entecavir. Multifunctional enzyme that converts the viral RNA genome into dsDNA in viral cytoplasmic capsids. This enzyme displays a DNA polymerase activity that can copy either DNA or RNA templates, and a ribonuclease H (RNase H) activity that cleaves the RNA strand of RNA-DNA heteroduplexes in a partially processive 3'- to 5'-endonucleasic mode. Neo-synthesized pregenomic RNA (pgRNA) are encapsidated together with the P protein, and reverse-transcribed inside the nucleocapsid. Initiation of reverse-transcription occurs first by binding the epsilon loop on the pgRNA genome, and is initiated by protein priming, thereby the 5'-end of (-)DNA is covalently linked to P protein. Partial (+)DNA is synthesized from the (-)DNA template and generates the relaxed circular DNA (RC-DNA) genome. After budding and infection, the RC-DNA migrates in the nucleus, and is converted into a plasmid-like covalently closed circular DNA (cccDNA). The activity of P protein does not seem to be necessary for cccDNA generation, and is presumably released from (+)DNA by host nuclear DNA repair machinery. The polypeptide is Protein P (Homo sapiens (Human)).